A 181-amino-acid chain; its full sequence is Isopentenyl-diphosphate Delta-isomerase (181 aa).

Histidine 25 and histidine 32 together coordinate Mn(2+). The 135-residue stretch at 30 to 164 folds into the Nudix hydrolase domain; sequence PLHLAFSCWL…PWAFSPWMVM (135 aa). Cysteine 67 is an active-site residue. Cysteine 67 contacts Mg(2+). Histidine 69 lines the Mn(2+) pocket. Glutamate 87 contacts Mg(2+). Mn(2+)-binding residues include glutamate 114 and glutamate 116. Glutamate 116 is a catalytic residue.

This sequence belongs to the IPP isomerase type 1 family. Homodimer. Mg(2+) is required as a cofactor. Mn(2+) serves as cofactor.

It localises to the cytoplasm. It carries out the reaction isopentenyl diphosphate = dimethylallyl diphosphate. The protein operates within isoprenoid biosynthesis; dimethylallyl diphosphate biosynthesis; dimethylallyl diphosphate from isopentenyl diphosphate: step 1/1. In terms of biological role, catalyzes the 1,3-allylic rearrangement of the homoallylic substrate isopentenyl (IPP) to its highly electrophilic allylic isomer, dimethylallyl diphosphate (DMAPP). This chain is Isopentenyl-diphosphate Delta-isomerase, found in Salmonella typhi.